We begin with the raw amino-acid sequence, 103 residues long: Glutaredoxin-C11 (103 aa).

The region spanning 1–102 is the Glutaredoxin domain; sequence MERIRDLSSK…QMLKDAKAIW (102 aa). Cysteines 21 and 24 form a disulfide.

This sequence belongs to the glutaredoxin family. CC-type subfamily.

Its subcellular location is the cytoplasm. In terms of biological role, has a glutathione-disulfide oxidoreductase activity in the presence of NADPH and glutathione reductase. Reduces low molecular weight disulfides and proteins. This Arabidopsis thaliana (Mouse-ear cress) protein is Glutaredoxin-C11 (GRXC11).